A 479-amino-acid polypeptide reads, in one-letter code: Probable phosphatidate cytidylyltransferase (479 aa).

Positions 1–28 (MRTDNIRNRKEQLKKQEKKDFDSSKDEE) are enriched in basic and acidic residues. The tract at residues 1–71 (MRTDNIRNRK…NNNNNNNNIK (71 aa)) is disordered. Topologically, residues 1 to 108 (MRTDNIRNRK…LAIRSVMGAF (108 aa)) are cytoplasmic. The span at 53–69 (NKNIINQKTNNNNNNNN) shows a compositional bias: low complexity. Residues 109 to 129 (MIGFFTIVLSTDHFIVALFVI) traverse the membrane as a helical segment. Residues 130-159 (ALQLLVFKEMIALRYIEAKEKKIPHFRTLN) lie on the Extracellular side of the membrane. Residues 160–180 (WFFLFTSFFFFYAKPILITLA) form a helical membrane-spanning segment. At 181–192 (NYYPDIFQHFVR) the chain is on the cytoplasmic side. The helical transmembrane segment at 193 to 213 (YHLWHSFSLYCIGFVLFILTL) threads the bilayer. The Extracellular portion of the chain corresponds to 214-240 (RKGVYRYQFSQLTWTLMILMMVVVQSN). Residues 241-261 (FLISNIYQGLIWFILPVSIIV) traverse the membrane as a helical segment. The Cytoplasmic portion of the chain corresponds to 262–293 (CNDIFAYFNGFFLGKKFINRPLMKISPNKTWE). A helical membrane pass occupies residues 294–314 (GFIGATGWTLLFAYYFCGFLL). Residues 315–375 (KYDWIVCPKG…FTYIPIQFHA (61 aa)) are Extracellular-facing. A helical membrane pass occupies residues 376 to 396 (LVLALFGSLIAPFGGFFASGI). At 397 to 479 (KRAYKVKDFD…IEFTTGTITA (83 aa)) the chain is on the cytoplasmic side.

It belongs to the CDS family.

Its subcellular location is the membrane. The catalysed reaction is a 1,2-diacyl-sn-glycero-3-phosphate + CTP + H(+) = a CDP-1,2-diacyl-sn-glycerol + diphosphate. It functions in the pathway phospholipid metabolism; CDP-diacylglycerol biosynthesis; CDP-diacylglycerol from sn-glycerol 3-phosphate: step 3/3. The sequence is that of Probable phosphatidate cytidylyltransferase (cdsA) from Dictyostelium discoideum (Social amoeba).